The sequence spans 32 residues: Toxic phospholipase A2 (32 aa).

This sequence belongs to the phospholipase A2 family. Group III subfamily. It depends on Ca(2+) as a cofactor.

Its subcellular location is the secreted. It localises to the nematocyst. It carries out the reaction a 1,2-diacyl-sn-glycero-3-phosphocholine + H2O = a 1-acyl-sn-glycero-3-phosphocholine + a fatty acid + H(+). Its function is as follows. PLA2 catalyzes the calcium-dependent hydrolysis of the 2-acyl groups in 3-sn-phosphoglycerides. This is Toxic phospholipase A2 from Rhopilema nomadica (Mediteranean medusa).